A 203-amino-acid chain; its full sequence is Guanylate kinase (203 aa).

The Guanylate kinase-like domain maps to 3-181; the sequence is GTLYIVAAPS…AVAEMCAIFT (179 aa). 10–17 contributes to the ATP binding site; the sequence is APSGAGKS.

It belongs to the guanylate kinase family.

It is found in the cytoplasm. The enzyme catalyses GMP + ATP = GDP + ADP. In terms of biological role, essential for recycling GMP and indirectly, cGMP. This chain is Guanylate kinase, found in Xanthomonas euvesicatoria pv. vesicatoria (strain 85-10) (Xanthomonas campestris pv. vesicatoria).